We begin with the raw amino-acid sequence, 388 residues long: Chaperone protein DnaJ (388 aa).

Residues 5 to 69 (DYYDVLGVDK…QKRAQYDQFG (65 aa)) form the J domain. Residues 145 to 227 (GKKTDITYTR…CHGQGTVDKK (83 aa)) form a CR-type zinc finger. Residues Cys158, Cys161, Cys175, Cys178, Cys201, Cys204, Cys215, and Cys218 each coordinate Zn(2+). CXXCXGXG motif repeat units lie at residues 158–165 (CPTCDGSG), 175–182 (CDKCHGSG), 201–208 (CDKCGGRG), and 215–222 (CQTCHGQG).

It belongs to the DnaJ family. Homodimer. The cofactor is Zn(2+).

The protein localises to the cytoplasm. Its function is as follows. Participates actively in the response to hyperosmotic and heat shock by preventing the aggregation of stress-denatured proteins and by disaggregating proteins, also in an autonomous, DnaK-independent fashion. Unfolded proteins bind initially to DnaJ; upon interaction with the DnaJ-bound protein, DnaK hydrolyzes its bound ATP, resulting in the formation of a stable complex. GrpE releases ADP from DnaK; ATP binding to DnaK triggers the release of the substrate protein, thus completing the reaction cycle. Several rounds of ATP-dependent interactions between DnaJ, DnaK and GrpE are required for fully efficient folding. Also involved, together with DnaK and GrpE, in the DNA replication of plasmids through activation of initiation proteins. The protein is Chaperone protein DnaJ of Lactobacillus johnsonii (strain CNCM I-12250 / La1 / NCC 533).